Consider the following 87-residue polypeptide: Acyl carrier protein 3 (87 aa).

Residues 1–79 (MSNPTVLDQI…DLVTYIEAAL (79 aa)) enclose the Carrier domain. O-(pantetheine 4'-phosphoryl)serine is present on serine 39.

The protein belongs to the acyl carrier protein (ACP) family. Post-translationally, 4'-phosphopantetheine is transferred from CoA to a specific serine of apo-ACP by AcpS. This modification is essential for activity because fatty acids are bound in thioester linkage to the sulfhydryl of the prosthetic group.

Its subcellular location is the cytoplasm. It participates in lipid metabolism; fatty acid biosynthesis. Its function is as follows. Carrier of the growing fatty acid chain in fatty acid biosynthesis. The sequence is that of Acyl carrier protein 3 from Ralstonia nicotianae (strain ATCC BAA-1114 / GMI1000) (Ralstonia solanacearum).